The chain runs to 368 residues: MTTPSAELPALARIRDDVRAMQAYVVADATGYLKMDAMENPFGLPPALQAALGQRLGQLALNRYPGTRQNDLKAALAAYAGAPAGSAVLLGNGSDELISLVALACARAQATVLAPVPGFVMYAMSAQLQGLGFVGVPLTADFELDEAAMLAAIAQHRPAITFLAYPNNPTATLWDEAVVQRIIDAAGAQGGIVVMDEAYQPFASRSWIERMRAQPERNGHVLLMRTLSKFGLAGVRLGYMIGPAALVAEVDKVRPPYNVSVLNTEAALFALEHADVFAAQADELRAARTELLAALRAMPGIERVWDSQANMVLVRVPDAARAYEGMKARKVLVKNVSTMHPLLAGCLRLTVGSSADNAQMLTALQASL.

Lys229 bears the N6-(pyridoxal phosphate)lysine mark.

Belongs to the class-II pyridoxal-phosphate-dependent aminotransferase family. Histidinol-phosphate aminotransferase subfamily. In terms of assembly, homodimer. Pyridoxal 5'-phosphate is required as a cofactor.

The enzyme catalyses L-histidinol phosphate + 2-oxoglutarate = 3-(imidazol-4-yl)-2-oxopropyl phosphate + L-glutamate. It functions in the pathway amino-acid biosynthesis; L-histidine biosynthesis; L-histidine from 5-phospho-alpha-D-ribose 1-diphosphate: step 7/9. The chain is Histidinol-phosphate aminotransferase from Acidovorax sp. (strain JS42).